The following is a 139-amino-acid chain: Fluoroacetyl-CoA thioesterase (139 aa).

Residues 40–50 (FATGFMVGLME) and Gly-69 contribute to the substrate site. Catalysis depends on residues Thr-42 and Glu-50. CoA-binding positions include Gly-69 and 76–77 (HT). His-76 is an active-site residue. Position 120 (Arg-120) interacts with substrate.

In terms of assembly, homodimer.

The catalysed reaction is fluoroacetyl-CoA + H2O = fluoroacetate + CoA + H(+). Its function is as follows. Hydrolyzes fluoroacetyl-CoA before it can react with citrate synthase, and thus confers fluoroacetate resistance. Cannot use acetyl-CoA as substrate. This is Fluoroacetyl-CoA thioesterase (flK) from Streptantibioticus cattleyicolor (Streptomyces cattleya).